The sequence spans 359 residues: 4-galactosyl-N-acetylglucosaminide 3-alpha-L-fucosyltransferase FUT6 (359 aa).

The Cytoplasmic segment spans residues 1–14 (MDPLGPAKPQWSWR). The chain crosses the membrane as a helical; Signal-anchor for type II membrane protein span at residues 15-34 (CCLTTLLFQLLVAVCFFSYL). At 35–359 (RVSRDDPTVY…QTRSIAAWFT (325 aa)) the chain is on the lumenal side. 4 N-linked (GlcNAc...) asparagine glycosylation sites follow: N46, N91, N153, and N184. Positions 73-112 (KPIALPRCSEMVPGTADCNITADRKVYPQADAVIVHHREV) are determines site-specific fucosylation.

Belongs to the glycosyltransferase 10 family. Homodimer and monomer. Monomer (secreted form). Post-translationally, N-glycosylated. Proteolytic cleavage releases a secreted glycoform of 43 kDa.

The protein localises to the golgi apparatus. Its subcellular location is the golgi stack membrane. The protein resides in the secreted. The enzyme catalyses a beta-D-galactosyl-(1-&gt;4)-N-acetyl-beta-D-glucosaminyl derivative + GDP-beta-L-fucose = a beta-D-galactosyl-(1-&gt;4)-[alpha-L-fucosyl-(1-&gt;3)]-N-acetyl-beta-D-glucosaminyl derivative + GDP + H(+). It catalyses the reaction an N-acetyl-alpha-neuraminyl-(2-&gt;3)-beta-D-galactosyl-(1-&gt;4)-N-acetyl-beta-D-glucosaminyl derivative + GDP-beta-L-fucose = an alpha-Neu5Ac-(2-&gt;3)-beta-D-Gal-(1-&gt;4)-[alpha-L-Fuc-(1-&gt;3)]-beta-D-GlcNAc derivative + GDP + H(+). It carries out the reaction an alpha-Neu5Ac-(2-&gt;3)-beta-D-Gal-(1-&gt;4)-beta-D-GlcNAc-(1-&gt;3)-beta-D-Gal-(1-&gt;4)-[alpha-L-Fuc-(1-&gt;3)]-beta-D-GlcNAc derivative + GDP-beta-L-fucose = an alpha-Neu5Ac-(2-&gt;3)-beta-D-Gal-(1-&gt;4)-[alpha-L-Fuc-(1-&gt;3)]-beta-D-GlcNAc-(1-&gt;3)-beta-D-Gal-(1-&gt;4)-[alpha-L-Fuc-(1-&gt;3)]-beta-D-GlcNAc derivative + GDP + H(+). The catalysed reaction is a neolactoside nLc6Cer + GDP-beta-L-fucose = beta-D-Gal-(1-&gt;4)-[alpha-L-Fuc-(1-&gt;3)]-beta-D-GlcNAc-(1-&gt;3)-beta-D-Gal-(1-&gt;4)-beta-D-GlcNAc-(1-&gt;3)-beta-D-Gal-(1-&gt;4)-beta-D-Glc-(1&lt;-&gt;1')-Cer + GDP + H(+). The enzyme catalyses a neolactoside nLc6Cer + GDP-beta-L-fucose = beta-D-galactosyl-(1-&gt;4)-N-acetyl-beta-D-glucosaminyl-(1-&gt;3)-beta-D-galactosyl-(1-&gt;4)-[alpha-L-fucosyl-(1-&gt;3)]-N-acetyl-beta-D-glucosaminyl-(1-&gt;3)-beta-D-galactosyl-(1-&gt;4)-beta-D-glucosyl-(1&lt;-&gt;1')-ceramide + GDP + H(+). It catalyses the reaction a neolactoside VI(3)-alpha-NeuNAc-nLc6Cer + GDP-beta-L-fucose = a neolactoside VI(3)-alpha-NeuAc,V(3)-alphaFuc-nLc6Cer + GDP + H(+). It carries out the reaction beta-D-galactosyl-(1-&gt;4)-N-acetyl-D-glucosamine + GDP-beta-L-fucose = beta-D-galactosyl-(1-&gt;4)-[alpha-L-fucosyl-(1-&gt;3)]-N-acetyl-D-glucosamine + GDP + H(+). The catalysed reaction is N-acetyl-alpha-neuraminosyl-(2-&gt;3)-beta-D-galactosyl-(1-&gt;4)-N-acetyl-beta-D-glucosamine + GDP-beta-L-fucose = N-acetyl-alpha-neuraminosyl-(2-&gt;3)-beta-D-galactosyl-(1-&gt;4)-[alpha-L-fucosyl-(1-&gt;3)]-N-acetyl-beta-D-glucosamine + GDP + H(+). The enzyme catalyses lactose + GDP-beta-L-fucose = beta-D-galactosyl-(1-&gt;4)-[alpha-L-fucosyl-(1-&gt;3)]-D-glucose + GDP + H(+). It catalyses the reaction alpha-L-Fuc-(1-&gt;2)-beta-D-Gal-(1-&gt;4)-D-Glc + GDP-beta-L-fucose = alpha-L-Fuc-(1-&gt;2)-beta-D-Gal-(1-&gt;4)-[alpha-L-Fuc-(1-&gt;3)]-D-Glc + GDP + H(+). It carries out the reaction a beta-D-galactosyl-(1-&gt;4)-N-acetyl-beta-D-6-sulfooxy-glucosaminyl derivative + GDP-beta-L-fucose = a beta-D-galactosyl-(1-&gt;4)-[alpha-L-fucosyl-(1-&gt;3)]-N-acetyl-beta-D-6-sulfooxy-glucosaminyl derivative + GDP + H(+). The protein operates within protein modification; protein glycosylation. Catalyzes the transfer of L-fucose, from a guanosine diphosphate-beta-L-fucose, to the N-acetyl glucosamine (GlcNAc) of a distal alpha2,3 sialylated lactosamine unit of a glycoprotein- or glycolipid-linked sialopolylactosamines chain or of a distal or internal lactosamine unit of a neutral glycoprotein- or glycolipid-linked polylactosamines chain through an alpha-1,3 glycosidic linkage and participates in surface expression of the sialyl Lewis X (sLe(x)), Lewis X (Le(x)) and non sialylated VIM2 determinants. Moreover transfers fucose to H-type 2 (Fucalpha1-2Galbeta1-4GlcNAc) chain acceptor substrates and participates in difucosylated sialyl Lewis x determinants. Also fucosylates a polylactosamine substrate having a 6 sulfate modification at the GlcNAc moiety and gives rise to sialyl and non-sialyl 6-sulfo lewis X. Does not have activity towards type 1 ((Galbeta1-3GlcNAc)) and H-type 1 chain (Fucalpha1-2Galbeta1-3GlcNAc) acceptors substrates. The sequence is that of 4-galactosyl-N-acetylglucosaminide 3-alpha-L-fucosyltransferase FUT6 from Pan troglodytes (Chimpanzee).